We begin with the raw amino-acid sequence, 366 residues long: Beta sliding clamp (366 aa).

This sequence belongs to the beta sliding clamp family. As to quaternary structure, forms a ring-shaped head-to-tail homodimer around DNA which binds and tethers DNA polymerases and other proteins to the DNA. The DNA replisome complex has a single clamp-loading complex (3 tau and 1 each of delta, delta', psi and chi subunits) which binds 3 Pol III cores (1 core on the leading strand and 2 on the lagging strand) each with a beta sliding clamp dimer. Additional proteins in the replisome are other copies of gamma, psi and chi, Ssb, DNA helicase and RNA primase.

The protein resides in the cytoplasm. Confers DNA tethering and processivity to DNA polymerases and other proteins. Acts as a clamp, forming a ring around DNA (a reaction catalyzed by the clamp-loading complex) which diffuses in an ATP-independent manner freely and bidirectionally along dsDNA. Initially characterized for its ability to contact the catalytic subunit of DNA polymerase III (Pol III), a complex, multichain enzyme responsible for most of the replicative synthesis in bacteria; Pol III exhibits 3'-5' exonuclease proofreading activity. The beta chain is required for initiation of replication as well as for processivity of DNA replication. The protein is Beta sliding clamp (dnaN) of Chlamydia pneumoniae (Chlamydophila pneumoniae).